The chain runs to 121 residues: Large ribosomal subunit protein bL12 (121 aa).

Belongs to the bacterial ribosomal protein bL12 family. As to quaternary structure, homodimer. Part of the ribosomal stalk of the 50S ribosomal subunit. Forms a multimeric L10(L12)X complex, where L10 forms an elongated spine to which 2 to 4 L12 dimers bind in a sequential fashion. Binds GTP-bound translation factors.

In terms of biological role, forms part of the ribosomal stalk which helps the ribosome interact with GTP-bound translation factors. Is thus essential for accurate translation. The sequence is that of Large ribosomal subunit protein bL12 from Aliivibrio salmonicida (strain LFI1238) (Vibrio salmonicida (strain LFI1238)).